Consider the following 117-residue polypeptide: MSKNIHDVAYGLQKAIADHTDFKTLKESYAKVQGDADSKQLFDTFRNMQLEIQQKMMQGQEITEEDNKKAQEVIDLIQQNEHIKKLMEAEQRLNVVIGDINKIIMKPLEELYSAYQA.

This sequence belongs to the UPF0342 family.

This Bacillus cytotoxicus (strain DSM 22905 / CIP 110041 / 391-98 / NVH 391-98) protein is UPF0342 protein Bcer98_0695.